The sequence spans 474 residues: Synaptotagmin-17 (474 aa).

The tract at residues 60 to 112 (WLMASRSSDKDGDSVHTASEVPLTPRTNSPDGRRSSSDTSKSTYSLTRRISSL) is disordered. Residues 96–112 (SDTSKSTYSLTRRISSL) are compositionally biased toward low complexity. 2 positions are modified to phosphoserine: Ser118 and Ser119. 2 consecutive C2 domains span residues 184 to 310 (QLGM…HWWK) and 321 to 455 (ELGE…EQWH).

Belongs to the synaptotagmin family.

It localises to the membrane. In terms of biological role, plays a role in dendrite formation by melanocytes. The sequence is that of Synaptotagmin-17 (SYT17) from Pongo abelii (Sumatran orangutan).